Consider the following 210-residue polypeptide: Na(+)-translocating NADH-quinone reductase subunit D (210 aa).

The next 6 helical transmembrane spans lie at valine 10–serine 30, leucine 42–isoleucine 62, isoleucine 72–alanine 92, valine 103–methionine 123, phenylalanine 143–phenylalanine 163, and asparagine 178–isoleucine 198.

It belongs to the NqrDE/RnfAE family. In terms of assembly, composed of six subunits; NqrA, NqrB, NqrC, NqrD, NqrE and NqrF.

It localises to the cell inner membrane. The catalysed reaction is a ubiquinone + n Na(+)(in) + NADH + H(+) = a ubiquinol + n Na(+)(out) + NAD(+). In terms of biological role, NQR complex catalyzes the reduction of ubiquinone-1 to ubiquinol by two successive reactions, coupled with the transport of Na(+) ions from the cytoplasm to the periplasm. NqrA to NqrE are probably involved in the second step, the conversion of ubisemiquinone to ubiquinol. The polypeptide is Na(+)-translocating NADH-quinone reductase subunit D (Pseudoalteromonas atlantica (strain T6c / ATCC BAA-1087)).